The primary structure comprises 233 residues: H-2 class II histocompatibility antigen, A-S alpha chain (233 aa).

Residues 1 to 88 form an alpha-1 region; it reads EDDIEADHVG…KRSNSTPATN (88 aa). The Extracellular portion of the chain corresponds to 1–195; sequence EDDIEADHVG…IPAPMSELTE (195 aa). The interval 89 to 182 is alpha-2; that stretch reads EAPQATVFPK…GLEEPVLKHW (94 aa). The region spanning 91 to 183 is the Ig-like C1-type domain; that stretch reads PQATVFPKSP…LEEPVLKHWE (93 aa). Cys111 and Cys167 form a disulfide bridge. Residue Asn122 is glycosylated (N-linked (GlcNAc...) asparagine). The segment at 183–195 is connecting peptide; the sequence is EPEIPAPMSELTE. Residues 196–221 traverse the membrane as a helical segment; it reads TVVCALGLSVGLVGIVVGTIFIIQGL. Topologically, residues 222–233 are cytoplasmic; that stretch reads RSGGTSRHPGPL.

The protein belongs to the MHC class II family.

It localises to the membrane. The polypeptide is H-2 class II histocompatibility antigen, A-S alpha chain (H2-Aa) (Mus musculus (Mouse)).